A 131-amino-acid chain; its full sequence is Small ribosomal subunit protein bS6m (131 aa).

This sequence belongs to the bacterial ribosomal protein bS6 family. As to quaternary structure, component of the mitochondrial small ribosomal subunit (mt-SSU). Mature yeast 74S mitochondrial ribosomes consist of a small (37S) and a large (54S) subunit. The 37S small subunit contains a 15S ribosomal RNA (15S mt-rRNA) and 34 different proteins. The 54S large subunit contains a 21S rRNA (21S mt-rRNA) and 46 different proteins.

The protein localises to the mitochondrion. Component of the mitochondrial ribosome (mitoribosome), a dedicated translation machinery responsible for the synthesis of mitochondrial genome-encoded proteins, including at least some of the essential transmembrane subunits of the mitochondrial respiratory chain. The mitoribosomes are attached to the mitochondrial inner membrane and translation products are cotranslationally integrated into the membrane. This Saccharomyces cerevisiae (strain ATCC 204508 / S288c) (Baker's yeast) protein is Small ribosomal subunit protein bS6m (MRP17).